A 49-amino-acid chain; its full sequence is uncharacterized protein (49 aa).

This is an uncharacterized protein from Archaeoglobus fulgidus (strain ATCC 49558 / DSM 4304 / JCM 9628 / NBRC 100126 / VC-16).